The primary structure comprises 255 residues: Electron transfer flavoprotein subunit beta (255 aa).

N-acetylalanine is present on alanine 2. AMP-binding positions include alanine 9, 39–42 (NPFC), cysteine 66, and 123–134 (GKQAIDDDCNQT). The segment at 183-205 (ADLRLNEPRYATLPNIMKAKKKK) is recognition loop. Lysine 200 is subject to N6,N6,N6-trimethyllysine; by ETFBKMT; alternate. Lysine 200 carries the N6-acetyllysine; alternate modification. The residue at position 200 (lysine 200) is an N6-methyllysine; alternate. Lysine 203 bears the N6,N6,N6-trimethyllysine; by ETFBKMT mark. At lysine 210 the chain carries N6-acetyllysine; alternate. Lysine 210 bears the N6-succinyllysine; alternate mark. Phosphoserine is present on residues serine 223 and serine 226. Position 238 is an N6-acetyllysine (lysine 238). Residue lysine 248 is modified to N6-acetyllysine; alternate. Lysine 248 is subject to N6-succinyllysine; alternate.

It belongs to the ETF beta-subunit/FixA family. In terms of assembly, heterodimer composed of ETFA and ETFB. Identified in a complex that contains ETFA, ETFB and ETFRF1. Interacts with ACADM. In terms of processing, methylated. Trimethylation at Lys-200 and Lys-203 may negatively regulate the activity in electron transfer from acyl-CoA dehydrogenases.

It is found in the mitochondrion matrix. Functionally, heterodimeric electron transfer flavoprotein that accepts electrons from several mitochondrial dehydrogenases, including acyl-CoA dehydrogenases, glutaryl-CoA and sarcosine dehydrogenase. It transfers the electrons to the main mitochondrial respiratory chain via ETF-ubiquinone oxidoreductase. Required for normal mitochondrial fatty acid oxidation and normal amino acid metabolism. ETFB binds an AMP molecule that probably has a purely structural role. The protein is Electron transfer flavoprotein subunit beta of Mus musculus (Mouse).